Consider the following 284-residue polypeptide: MSQQYPQTNDVPYLFSNTSTAYHTVDICKVNTSLKDSVPRFWLIYIHGGGWSDPNIQANTFSQIRDELLKEKDILAHISGIAAVNYRLSGDPSEGRNARYPDHLDDVKRAIGFLDSRYGFEDRYIVVGHSAGATLAFQLAMEPETSSLPTPKKPLAILGASGIYDLRRLLNSIWHVVKYREEYVHMLEGAFGPGGFAYGEQSEGRCSSEWDLASPAKATSYGSSWCNAQLAMLVHSPDDELVPLEQSTQFATVLESSLPPGVVQTRFDLAGSHDDIWRKPEGIT.

The short motif at 47–51 is the HGGXW element; sequence HGGGW. Ser-130 acts as the Nucleophile in catalysis.

The protein belongs to the kynurenine formamidase family.

The catalysed reaction is N-formyl-L-kynurenine + H2O = L-kynurenine + formate + H(+). Its pathway is secondary metabolite metabolism. Its function is as follows. Kynurenine formamidase; part of the cluster that mediates the biosynthesis of a highly modified cyclo-arginine-tryptophan dipeptide (cRW). Within the pathway, avaC catalyzes the deformylation of the cyclo-Arg-formylkynurenine iketopiperazine (DKP), produced by the FAD-dependent monooxygenase avaB. The first step of the pathway is perfornmed by the arginine-containing cyclodipeptide synthase (RCPDS) avaA that acts as the scaffold-generating enzyme and is responsible for formation of the cyclo-Arg-Trp (cRW) diketopiperazine. AvaB then acts as a multifunctional flavoenzyme that is responsible for generating the cyclo-Arg-formylkynurenine DKP, which can be deformylated by avaC. AvaB then further catalyzes an additional N-oxidation followed by cyclization and dehydration. The next step is an N-acetylation of the guanidine group catalyzed by the arginine N-acetyltransferase avaD. The roles of the additional enzymes identified within the ava cluster still have to be determined. This chain is Kynurenine formamidase avaC, found in Aspergillus versicolor.